Consider the following 571-residue polypeptide: DNA primase (571 aa).

The CHC2-type zinc finger occupies 20-44 (CPFHKEKTPSFQVDTEKGYYHCFGC). Residues 229-309 (AELVVVEGYM…KFRVRATSVP (81 aa)) enclose the Toprim domain. Mg(2+)-binding residues include Glu-235, Asp-280, and Asp-282.

This sequence belongs to the DnaG primase family. Monomer. Interacts with DnaB. It depends on Zn(2+) as a cofactor. Requires Mg(2+) as cofactor.

It catalyses the reaction ssDNA + n NTP = ssDNA/pppN(pN)n-1 hybrid + (n-1) diphosphate.. Functionally, RNA polymerase that catalyzes the synthesis of short RNA molecules used as primers for DNA polymerase during DNA replication. This Deinococcus radiodurans (strain ATCC 13939 / DSM 20539 / JCM 16871 / CCUG 27074 / LMG 4051 / NBRC 15346 / NCIMB 9279 / VKM B-1422 / R1) protein is DNA primase.